We begin with the raw amino-acid sequence, 469 residues long: Glutamate--tRNA ligase (469 aa).

The 'HIGH' region signature appears at proline 11–asparagine 21. The short motif at lysine 243 to arginine 247 is the 'KMSKS' region element. Lysine 246 is a binding site for ATP.

The protein belongs to the class-I aminoacyl-tRNA synthetase family. Glutamate--tRNA ligase type 1 subfamily. In terms of assembly, monomer.

The protein localises to the cytoplasm. The enzyme catalyses tRNA(Glu) + L-glutamate + ATP = L-glutamyl-tRNA(Glu) + AMP + diphosphate. Its function is as follows. Catalyzes the attachment of glutamate to tRNA(Glu) in a two-step reaction: glutamate is first activated by ATP to form Glu-AMP and then transferred to the acceptor end of tRNA(Glu). The protein is Glutamate--tRNA ligase of Burkholderia cenocepacia (strain ATCC BAA-245 / DSM 16553 / LMG 16656 / NCTC 13227 / J2315 / CF5610) (Burkholderia cepacia (strain J2315)).